We begin with the raw amino-acid sequence, 734 residues long: Photosystem I P700 chlorophyll a apoprotein A2 (734 aa).

The next 8 membrane-spanning stretches (helical) occupy residues 46 to 69, 135 to 158, 175 to 199, 273 to 291, 330 to 353, 369 to 395, 417 to 439, and 517 to 535; these read IFAS…FHVA, LYTG…LHLQ, LNHH…HVAI, IAHH…GHMY, IHFQ…QHMY, AALY…IFFI, AIIS…LYVH, and FLVH…LILV. [4Fe-4S] cluster is bound by residues Cys-559 and Cys-568. Helical transmembrane passes span 575–596 and 643–665; these read AFYL…YWHW and LSVW…MFLI. Residues His-654, Met-662, and Tyr-670 each contribute to the chlorophyll a site. Trp-671 provides a ligand contact to phylloquinone. Residues 707-727 form a helical membrane-spanning segment; the sequence is LVGLAHFSVGYIFTYAAFLIA.

Belongs to the PsaA/PsaB family. As to quaternary structure, the PsaA/B heterodimer binds the P700 chlorophyll special pair and subsequent electron acceptors. PSI consists of a core antenna complex that captures photons, and an electron transfer chain that converts photonic excitation into a charge separation. The eukaryotic PSI reaction center is composed of at least 11 subunits. P700 is a chlorophyll a/chlorophyll a' dimer, A0 is one or more chlorophyll a, A1 is one or both phylloquinones and FX is a shared 4Fe-4S iron-sulfur center. serves as cofactor.

Its subcellular location is the plastid. It is found in the chloroplast thylakoid membrane. The catalysed reaction is reduced [plastocyanin] + hnu + oxidized [2Fe-2S]-[ferredoxin] = oxidized [plastocyanin] + reduced [2Fe-2S]-[ferredoxin]. Functionally, psaA and PsaB bind P700, the primary electron donor of photosystem I (PSI), as well as the electron acceptors A0, A1 and FX. PSI is a plastocyanin-ferredoxin oxidoreductase, converting photonic excitation into a charge separation, which transfers an electron from the donor P700 chlorophyll pair to the spectroscopically characterized acceptors A0, A1, FX, FA and FB in turn. Oxidized P700 is reduced on the lumenal side of the thylakoid membrane by plastocyanin. The sequence is that of Photosystem I P700 chlorophyll a apoprotein A2 from Oryza sativa (Rice).